A 485-amino-acid chain; its full sequence is Glutamate--tRNA ligase (485 aa).

The 'HIGH' region signature appears at 11 to 21 (PSPTGYMHVGN). Residues Cys108, Cys110, Cys135, and Asp137 each contribute to the Zn(2+) site. The 'KMSKS' region signature appears at 252 to 256 (KLSKR). Lys255 lines the ATP pocket.

Belongs to the class-I aminoacyl-tRNA synthetase family. Glutamate--tRNA ligase type 1 subfamily. In terms of assembly, monomer. Zn(2+) serves as cofactor.

It localises to the cytoplasm. The enzyme catalyses tRNA(Glu) + L-glutamate + ATP = L-glutamyl-tRNA(Glu) + AMP + diphosphate. Catalyzes the attachment of glutamate to tRNA(Glu) in a two-step reaction: glutamate is first activated by ATP to form Glu-AMP and then transferred to the acceptor end of tRNA(Glu). This Clostridium botulinum (strain Loch Maree / Type A3) protein is Glutamate--tRNA ligase.